The following is a 172-amino-acid chain: Disulfide bond formation protein B (172 aa).

Over 1 to 11 the chain is Cytoplasmic; it reads MNPFRWGFRAQ. The helical transmembrane segment at 12–28 threads the bilayer; it reads FLLGFLACAGLLAYAIY. The Periplasmic segment spans residues 29–46; it reads VQLHLGLEPCPLCIFQRI. Residues Cys38 and Cys41 are joined by a disulfide bond. A helical membrane pass occupies residues 47 to 63; that stretch reads AFATLALLFLLGALHGP. The Cytoplasmic segment spans residues 64–70; it reads RGAGGRK. A helical transmembrane segment spans residues 71 to 88; that stretch reads AYGVLAFIAAGVGMGIAA. The Periplasmic segment spans residues 89 to 145; the sequence is RHVWVQIRPKDMMSSCGPPLSFLSETMGPFEVFRTVLTGTGDCGNIDWRFLGLSMPM. Cys104 and Cys131 are oxidised to a cystine. Residues 146 to 164 traverse the membrane as a helical segment; that stretch reads WSMVWFVGLALWALYAGFK. At 165–172 the chain is on the cytoplasmic side; the sequence is HRGPRKLF.

This sequence belongs to the DsbB family.

The protein localises to the cell inner membrane. In terms of biological role, required for disulfide bond formation in some periplasmic proteins. Acts by oxidizing the DsbA protein. The sequence is that of Disulfide bond formation protein B from Xanthomonas campestris pv. campestris (strain 8004).